The following is a 60-amino-acid chain: Large ribosomal subunit protein bL32 (60 aa).

Positions 1-19 (MAVPKRKKSKSRRNMHRSH) are enriched in basic residues. The disordered stretch occupies residues 1-24 (MAVPKRKKSKSRRNMHRSHHAIEP).

This sequence belongs to the bacterial ribosomal protein bL32 family.

The chain is Large ribosomal subunit protein bL32 from Wolbachia pipientis wMel.